Here is a 495-residue protein sequence, read N- to C-terminus: 3-octaprenyl-4-hydroxybenzoate carboxy-lyase (495 aa).

N172 contacts Mn(2+). Prenylated FMN-binding positions include I175–R177, R189–L191, and R194–G195. E238 is a Mn(2+) binding site. The Proton donor role is filled by D287.

This sequence belongs to the UbiD family. Homohexamer. Prenylated FMN serves as cofactor. The cofactor is Mn(2+).

It localises to the cell membrane. The enzyme catalyses a 4-hydroxy-3-(all-trans-polyprenyl)benzoate + H(+) = a 2-(all-trans-polyprenyl)phenol + CO2. The protein operates within cofactor biosynthesis; ubiquinone biosynthesis. Functionally, catalyzes the decarboxylation of 3-octaprenyl-4-hydroxy benzoate to 2-octaprenylphenol, an intermediate step in ubiquinone biosynthesis. The chain is 3-octaprenyl-4-hydroxybenzoate carboxy-lyase from Marinobacter nauticus (strain ATCC 700491 / DSM 11845 / VT8) (Marinobacter aquaeolei).